The primary structure comprises 73 residues: Putative antitoxin VapB38 (73 aa).

Its function is as follows. Probable antitoxin component of a type II toxin-antitoxin (TA) system. Its putative cognate toxin is VapC38. The polypeptide is Putative antitoxin VapB38 (vapB38) (Mycobacterium tuberculosis (strain ATCC 25618 / H37Rv)).